A 442-amino-acid polypeptide reads, in one-letter code: tRNA(Ile)-lysidine synthase (442 aa).

Residue 28–33 (SGGLDS) coordinates ATP.

The protein belongs to the tRNA(Ile)-lysidine synthase family.

The protein resides in the cytoplasm. It carries out the reaction cytidine(34) in tRNA(Ile2) + L-lysine + ATP = lysidine(34) in tRNA(Ile2) + AMP + diphosphate + H(+). In terms of biological role, ligates lysine onto the cytidine present at position 34 of the AUA codon-specific tRNA(Ile) that contains the anticodon CAU, in an ATP-dependent manner. Cytidine is converted to lysidine, thus changing the amino acid specificity of the tRNA from methionine to isoleucine. The protein is tRNA(Ile)-lysidine synthase of Pseudomonas aeruginosa (strain ATCC 15692 / DSM 22644 / CIP 104116 / JCM 14847 / LMG 12228 / 1C / PRS 101 / PAO1).